The following is a 602-amino-acid chain: Elongation factor 4 (602 aa).

The region spanning 7-189 (KFIRNFSIIA…QLVVAIPPPV (183 aa)) is the tr-type G domain. GTP is bound by residues 19–24 (DHGKST) and 136–139 (NKID).

This sequence belongs to the TRAFAC class translation factor GTPase superfamily. Classic translation factor GTPase family. LepA subfamily.

The protein resides in the cell inner membrane. The enzyme catalyses GTP + H2O = GDP + phosphate + H(+). Its function is as follows. Required for accurate and efficient protein synthesis under certain stress conditions. May act as a fidelity factor of the translation reaction, by catalyzing a one-codon backward translocation of tRNAs on improperly translocated ribosomes. Back-translocation proceeds from a post-translocation (POST) complex to a pre-translocation (PRE) complex, thus giving elongation factor G a second chance to translocate the tRNAs correctly. Binds to ribosomes in a GTP-dependent manner. This is Elongation factor 4 from Coxiella burnetii (strain Dugway 5J108-111).